We begin with the raw amino-acid sequence, 287 residues long: Seed leukoagglutinin (287 aa).

A signal peptide spans 1–29; sequence MATSNSKPTQVLLATFLTFFFLLLNNVNS. Tyrosine 74 is an N-acetyl-alpha-neuraminyl-(2-&gt;3)-beta-D-galactosyl-(1-&gt;4)-beta-D-glucose binding site. Residue asparagine 90 is glycosylated (N-linked (GlcNAc...) (paucimannose) asparagine). The N-acetyl-alpha-neuraminyl-(2-&gt;3)-beta-D-galactosyl-(1-&gt;4)-beta-D-glucose site is built by aspartate 116, serine 133, and lysine 136. N-linked (GlcNAc...) (paucimannose) asparagine glycosylation occurs at asparagine 142. Residues glutamate 156 and aspartate 158 each contribute to the Mn(2+) site. Residues aspartate 158, tyrosine 160, aspartate 166, and aspartate 169 each coordinate Ca(2+). N-acetyl-alpha-neuraminyl-(2-&gt;3)-beta-D-galactosyl-(1-&gt;4)-beta-D-glucose-binding residues include tyrosine 160 and aspartate 166. 2 residues coordinate Mn(2+): aspartate 169 and histidine 174. Asparagine 208 carries an N-linked (GlcNAc...) (high mannose) asparagine; partial glycan. Asparagine 220 carries an N-linked (GlcNAc...) (paucimannose) asparagine; partial glycan. Glutamate 253 contributes to the N-acetyl-alpha-neuraminyl-(2-&gt;3)-beta-D-galactosyl-(1-&gt;4)-beta-D-glucose binding site. The propeptide at 279 to 287 is removed in mature form; that stretch reads NVHIARYTA.

It belongs to the leguminous lectin family. As to quaternary structure, homodimer; disulfide-linked. Dimer of homodimers. The glycosylation on N-90 is determined to by of the high mannose type in PubMed:26003537, while PubMed:27720757 found a paucimannose at this position. In terms of processing, processed at its C-terminus.

In terms of biological role, sialic acid-binding lectin recognizing oligosaccharides containing terminal sialic acid linked via alpha-2,3 bond to penultimate galactose residues. Binds the trisaccharide sequence Neu5Ac-alpha-2,3-Gal-beta-1,4-GlcNAc. Binds fetuin when fully glycosylated but not when the high mannose-type glycans are removed, although the secondary structure is virtually unaffected by deglycosylation of the high mannose-type glycans. The lectin activity may depend on the presence of a single GlcNAc attached to N-90. The sequence is that of Seed leukoagglutinin from Maackia amurensis (Amur maackia).